Consider the following 3106-residue polypeptide: Cilia- and flagella-associated protein 54 (3106 aa).

Composition is skewed to low complexity over residues M1–V24, S34–S48, and E2356–T2368. Disordered regions lie at residues M1 to E58 and P2354 to S2374.

The protein belongs to the CFAP54 family. As to expression, expressed at high level in the testis and at a low level in the lung and brain.

The protein localises to the cytoplasm. Its subcellular location is the cytoskeleton. It is found in the cilium axoneme. Its function is as follows. Required for assembly and function of cilia and flagella. The sequence is that of Cilia- and flagella-associated protein 54 from Mus musculus (Mouse).